The sequence spans 164 residues: Transcription antitermination protein NusB (164 aa).

It belongs to the NusB family.

Its function is as follows. Involved in transcription antitermination. Required for transcription of ribosomal RNA (rRNA) genes. Binds specifically to the boxA antiterminator sequence of the ribosomal RNA (rrn) operons. This chain is Transcription antitermination protein NusB, found in Chlorobaculum parvum (strain DSM 263 / NCIMB 8327) (Chlorobium vibrioforme subsp. thiosulfatophilum).